We begin with the raw amino-acid sequence, 268 residues long: 3-methyl-2-oxobutanoate hydroxymethyltransferase (268 aa).

D41 and D80 together coordinate Mg(2+). Residues 41–42, D80, and K110 each bind 3-methyl-2-oxobutanoate; that span reads DS. E112 is a binding site for Mg(2+). The active-site Proton acceptor is the E178.

Belongs to the PanB family. Homodecamer; pentamer of dimers. Requires Mg(2+) as cofactor.

It is found in the cytoplasm. The catalysed reaction is 3-methyl-2-oxobutanoate + (6R)-5,10-methylene-5,6,7,8-tetrahydrofolate + H2O = 2-dehydropantoate + (6S)-5,6,7,8-tetrahydrofolate. The protein operates within cofactor biosynthesis; coenzyme A biosynthesis. In terms of biological role, catalyzes the reversible reaction in which hydroxymethyl group from 5,10-methylenetetrahydrofolate is transferred onto alpha-ketoisovalerate to form ketopantoate. The sequence is that of 3-methyl-2-oxobutanoate hydroxymethyltransferase from Natronomonas pharaonis (strain ATCC 35678 / DSM 2160 / CIP 103997 / JCM 8858 / NBRC 14720 / NCIMB 2260 / Gabara) (Halobacterium pharaonis).